The chain runs to 305 residues: UDP-N-acetylenolpyruvoylglucosamine reductase (305 aa).

The 166-residue stretch at 37-202 (GIGGPARFLA…LSVTFNLEPK (166 aa)) folds into the FAD-binding PCMH-type domain. The active site involves Arg-183.

Belongs to the MurB family. The cofactor is FAD.

Its subcellular location is the cytoplasm. It catalyses the reaction UDP-N-acetyl-alpha-D-muramate + NADP(+) = UDP-N-acetyl-3-O-(1-carboxyvinyl)-alpha-D-glucosamine + NADPH + H(+). It functions in the pathway cell wall biogenesis; peptidoglycan biosynthesis. Cell wall formation. The protein is UDP-N-acetylenolpyruvoylglucosamine reductase of Rhodopirellula baltica (strain DSM 10527 / NCIMB 13988 / SH1).